The primary structure comprises 187 residues: Ribosome-recycling factor (187 aa).

Belongs to the RRF family.

Its subcellular location is the cytoplasm. Functionally, responsible for the release of ribosomes from messenger RNA at the termination of protein biosynthesis. May increase the efficiency of translation by recycling ribosomes from one round of translation to another. The protein is Ribosome-recycling factor of Petrotoga mobilis (strain DSM 10674 / SJ95).